Consider the following 339-residue polypeptide: Ferredoxin--NADP reductase (339 aa).

Asp-32, Gln-40, Tyr-45, Val-85, Phe-120, Asp-287, and Thr-327 together coordinate FAD.

This sequence belongs to the ferredoxin--NADP reductase type 2 family. Homodimer. It depends on FAD as a cofactor.

It carries out the reaction 2 reduced [2Fe-2S]-[ferredoxin] + NADP(+) + H(+) = 2 oxidized [2Fe-2S]-[ferredoxin] + NADPH. The protein is Ferredoxin--NADP reductase of Wolbachia sp. subsp. Brugia malayi (strain TRS).